The following is a 185-amino-acid chain: Ribosome-recycling factor (185 aa).

Belongs to the RRF family.

The protein localises to the cytoplasm. Functionally, responsible for the release of ribosomes from messenger RNA at the termination of protein biosynthesis. May increase the efficiency of translation by recycling ribosomes from one round of translation to another. This is Ribosome-recycling factor from Pseudomonas putida (strain GB-1).